The primary structure comprises 311 residues: Purine nucleoside phosphorylase (311 aa).

The residue at position 2 (Ser-2) is an N-acetylserine. Residues Ser-46, His-81, 101-103, and Ala-134 each bind phosphate; that span reads RLH. Glu-219 contributes to the a purine D-ribonucleoside binding site. Phosphate is bound at residue Ser-238. Asn-261 contributes to the a purine D-ribonucleoside binding site. Ser-275 is modified (phosphoserine).

The protein belongs to the PNP/MTAP phosphorylase family.

The enzyme catalyses a purine D-ribonucleoside + phosphate = a purine nucleobase + alpha-D-ribose 1-phosphate. Its pathway is purine metabolism; purine nucleoside salvage. Functionally, the purine nucleoside phosphorylases catalyze the phosphorolytic breakdown of the N-glycosidic bond in the beta-(deoxy)ribonucleoside molecules, with the formation of the corresponding free purine bases and pentose-1-phosphate. Cleaves guanosine and inosine. This chain is Purine nucleoside phosphorylase (PNP1), found in Saccharomyces cerevisiae (strain ATCC 204508 / S288c) (Baker's yeast).